The following is a 140-amino-acid chain: PDZ domain-containing protein 11 (140 aa).

In terms of domain architecture, PDZ spans 47–129 (IVTLKKPPGA…ISMRVRFFPY (83 aa)).

As to quaternary structure, interacts with ATP2B1, ATP2B2, ATP2B3, ATP2B4 and ATP7A. Interacts with PLEKHA7 (via WW domains) at zonula adherens; this interaction is essential for the interaction between PLEKHA7 and the ADAM10-binding protein TSPAN33. Interacts with SLC5A6.

The protein localises to the cytoplasm. Its subcellular location is the cell junction. It is found in the adherens junction. The protein resides in the cell membrane. Functionally, mediates docking of ADAM10 to zonula adherens by interacting with PLEKHA7 which is required for PLEKHA7 to interact with the ADAM10-binding protein TSPAN33. The polypeptide is PDZ domain-containing protein 11 (Pdzd11) (Mus musculus (Mouse)).